A 1049-amino-acid polypeptide reads, in one-letter code: Cilia- and flagella-associated protein 337 (1049 aa).

Residues 81–116 (GTKEEYGELFDKVDVAQDGFINWDKLTSFILLELYE) enclose the EF-hand domain. WD repeat units follow at residues 138 to 177 (KHKDTIQKVIFLKNSSHYLTISKEGLLAIWGEHLKLQETF), 358 to 397 (NIAQGIHAFDYHSRLNLIATAGINNKVCLWNPYVVSKPVG), 401 to 440 (GHSASVIAVQFFVERKQLFSFSKDKVLRLWDIQHQLSIQR), 487 to 528 (SHEK…KQFT), 531 to 570 (HGNAEISTMALDANETRLLTGSTDGTVKIWDFNGYCHHTL), and 633 to 671 (QHHDDILCAAFLPPQTLVTGSYDGEIVLWNNSTENAHHV). The disordered stretch occupies residues 691–712 (LLSAGRSQPSHPMADHSTTGVR). A compositionally biased stretch (polar residues) spans 695–711 (GRSQPSHPMADHSTTGV). 3 WD repeats span residues 719 to 766 (EGKN…LLAE), 769 to 809 (AHSG…LNSS), and 825 to 866 (PHED…VWIF).

This sequence belongs to the CFAP337 family. As to quaternary structure, associates with components of the nexin-dynein regulatory complex (N-DRC) and the CFAP184:CFAP263 complex.

It localises to the cell projection. It is found in the cilium. Functionally, associates with components of the nexin-dynein regulatory complex (N-DRC), a key regulator of ciliary/flagellar motility, and might act as an inner dynein arm (IDA) hub or linkage. This chain is Cilia- and flagella-associated protein 337, found in Homo sapiens (Human).